A 54-amino-acid polypeptide reads, in one-letter code: Conotoxin mr5.4b (54 aa).

Positions 1 to 14 are cleaved as a signal peptide; that stretch reads ILLLLIASAPSVDA. The propeptide occupies 15-40; that stretch reads QLKTKDDVPLASFHANVKRTLQKLLN. Glu52 carries the 4-carboxyglutamate modification.

The protein belongs to the conotoxin T superfamily. Post-translationally, contains 2 disulfide bonds that can be either 'C1-C3, C2-C4' or 'C1-C4, C2-C3', since these disulfide connectivities have been observed for conotoxins with cysteine framework V (for examples, see AC P0DQQ7 and AC P81755). As to expression, expressed by the venom duct.

The protein resides in the secreted. The protein is Conotoxin mr5.4b of Conus marmoreus (Marble cone).